A 484-amino-acid chain; its full sequence is Ectonucleoside triphosphate diphosphohydrolase 6 (484 aa).

Topologically, residues M1–R39 are cytoplasmic. Residues V40–I60 traverse the membrane as a helical; Signal-anchor for type II membrane protein segment. The Lumenal segment spans residues K61–S484. N-linked (GlcNAc...) asparagine glycosylation is present at N220. E224 functions as the Proton acceptor in the catalytic mechanism. N-linked (GlcNAc...) asparagine glycosylation occurs at N284. Cystine bridges form between C325/C356 and C416/C430.

This sequence belongs to the GDA1/CD39 NTPase family. In terms of assembly, monomer. Requires Ca(2+) as cofactor. It depends on Mg(2+) as a cofactor. The secreted form may be produced by intracellular processing. Post-translationally, N-glycosylated. As to expression, expressed in most tissues, but predominantly in heart.

Its subcellular location is the golgi apparatus membrane. The protein resides in the secreted. It localises to the cell membrane. It carries out the reaction a ribonucleoside 5'-diphosphate + H2O = a ribonucleoside 5'-phosphate + phosphate + H(+). The enzyme catalyses IDP + H2O = IMP + phosphate + H(+). It catalyses the reaction GDP + H2O = GMP + phosphate + H(+). The catalysed reaction is UDP + H2O = UMP + phosphate + H(+). Glycosylation does not appear to be required for enzymatic activity. Catalyzes the hydrolysis of nucleoside triphosphates and diphosphates in a calcium- or magnesium-dependent manner. Has a strong preference for nucleoside diphosphates, preferentially hydrolyzes GDP, IDP, and UDP, with slower hydrolysis of CDP, ITP, GTP, CTP, ADP, and UTP and virtually no hydrolysis of ATP. The membrane bound form might support glycosylation reactions in the Golgi apparatus and, when released from cells, might catalyze the hydrolysis of extracellular nucleotides. In Homo sapiens (Human), this protein is Ectonucleoside triphosphate diphosphohydrolase 6 (ENTPD6).